A 189-amino-acid polypeptide reads, in one-letter code: GMP synthase [glutamine-hydrolyzing] subunit A (189 aa).

The Glutamine amidotransferase type-1 domain maps to Lys5–Tyr189. Cys79 acts as the Nucleophile in catalysis. Residues His166 and Glu168 contribute to the active site.

Heterodimer composed of a glutamine amidotransferase subunit (A) and a GMP-binding subunit (B).

The enzyme catalyses XMP + L-glutamine + ATP + H2O = GMP + L-glutamate + AMP + diphosphate + 2 H(+). Its pathway is purine metabolism; GMP biosynthesis; GMP from XMP (L-Gln route): step 1/1. Its function is as follows. Catalyzes the synthesis of GMP from XMP. The polypeptide is GMP synthase [glutamine-hydrolyzing] subunit A (Methanosarcina barkeri (strain Fusaro / DSM 804)).